Here is a 540-residue protein sequence, read N- to C-terminus: Homoserine O-acetyltransferase (540 aa).

Residues 66–404 (NVILICHALT…QHGHDAFLLE (339 aa)) enclose the AB hydrolase-1 domain. Ser171 serves as the catalytic Nucleophile. Arg240 is a binding site for substrate. Positions 262 to 284 (QDTDKSGIKGTTGTEGKNSSEIS) are disordered. Residues Asp365 and His398 contribute to the active site. Asp399 serves as a coordination point for substrate. CBS domains follow at residues 425 to 484 (MNRN…ELDE) and 486 to 540 (ITRD…GKYD).

The protein belongs to the AB hydrolase superfamily. MetX family. Homodimer.

Its subcellular location is the cytoplasm. The enzyme catalyses L-homoserine + acetyl-CoA = O-acetyl-L-homoserine + CoA. The protein operates within amino-acid biosynthesis; L-methionine biosynthesis via de novo pathway; O-acetyl-L-homoserine from L-homoserine: step 1/1. In terms of biological role, transfers an acetyl group from acetyl-CoA to L-homoserine, forming acetyl-L-homoserine. In vitro, can also use propionyl-CoA or butiryl-CoA as acyl donor. The protein is Homoserine O-acetyltransferase of Methanosarcina acetivorans (strain ATCC 35395 / DSM 2834 / JCM 12185 / C2A).